We begin with the raw amino-acid sequence, 350 residues long: GTPase Obg (350 aa).

An Obg domain is found at 1 to 159; it reads MKLVDEAEIE…RTLKLELKLL (159 aa). The interval 127–147 is disordered; it reads NMHFKSSTNRSPRQALPGEPG. In terms of domain architecture, OBG-type G spans 160 to 337; it reads ADVGLLGFPN…IMSRIMAFFD (178 aa). Residues 166 to 173, 191 to 195, 213 to 216, 287 to 290, and 318 to 320 contribute to the GTP site; these read GFPNAGKS, FTTLY, DIPG, NKAD, and SAL. Ser173 and Thr193 together coordinate Mg(2+).

Belongs to the TRAFAC class OBG-HflX-like GTPase superfamily. OBG GTPase family. Monomer. Mg(2+) is required as a cofactor.

Its subcellular location is the cytoplasm. Its function is as follows. An essential GTPase which binds GTP, GDP and possibly (p)ppGpp with moderate affinity, with high nucleotide exchange rates and a fairly low GTP hydrolysis rate. Plays a role in control of the cell cycle, stress response, ribosome biogenesis and in those bacteria that undergo differentiation, in morphogenesis control. This Stenotrophomonas maltophilia (strain R551-3) protein is GTPase Obg.